The following is a 576-amino-acid chain: Sodium/proton antiporter 1 (576 aa).

The N-terminal 60 residues, methionine 1 to arginine 60, are a transit peptide targeting the chloroplast. 9 helical membrane-spanning segments follow: residues threonine 237–threonine 257, leucine 279–valine 299, phenylalanine 320–valine 340, alanine 357–phenylalanine 377, alanine 379–leucine 399, glycine 426–leucine 446, leucine 462–alanine 482, leucine 501–valine 521, and phenylalanine 541–phenylalanine 561.

The protein belongs to the NhaD Na(+)/H(+) (TC 2.A.62) antiporter family. Mostly expressed in mature and senescent leaves, and, to a lower extent, in seeds, roots, shoots, flowers and developing siliques.

It is found in the plastid. The protein resides in the chloroplast membrane. The protein localises to the chloroplast envelope. In terms of biological role, na(+)/H(+) antiporter that extrudes sodium in exchange for external protons. This Arabidopsis thaliana (Mouse-ear cress) protein is Sodium/proton antiporter 1.